The primary structure comprises 1033 residues: Putative U-box domain-containing protein 42 (1033 aa).

The tract at residues Ser145–Tyr226 is disordered. Polar residues predominate over residues Leu200–Tyr226. Positions Pro245–Ala322 constitute a U-box domain. ARM repeat units lie at residues Pro483–Ile522, Gly523–Leu562, His564–Glu608, Gly610–Lys659, and Ala665–Pro704.

It carries out the reaction S-ubiquitinyl-[E2 ubiquitin-conjugating enzyme]-L-cysteine + [acceptor protein]-L-lysine = [E2 ubiquitin-conjugating enzyme]-L-cysteine + N(6)-ubiquitinyl-[acceptor protein]-L-lysine.. Its pathway is protein modification; protein ubiquitination. Functionally, functions as an E3 ubiquitin ligase. The polypeptide is Putative U-box domain-containing protein 42 (PUB42) (Arabidopsis thaliana (Mouse-ear cress)).